Reading from the N-terminus, the 199-residue chain is MANVRARIELMVGQKSNIPAEMLSFEGLETDKEHVAVVFNQADKHQSTPLVRMHSECLTGDVFHSSRCDCGEQLEETINRMSESGGIILYLRQEGRGIGLYNKLDAYELQSQGMNTYEANNHLGFGDDLRDFKEAAQMLEALNISKIKLVTNNPKKIKDIQNYGIEIDEVVNTHAHVKQGNEHYLHSKAAHGHKLNFDK.

A GTP-binding site is contributed by 52 to 56; the sequence is RMHSE. The Zn(2+) site is built by C57, C68, and C70. GTP-binding positions include Q73, 94–96, and T116; that span reads EGR. Residue D128 is the Proton acceptor of the active site. The active-site Nucleophile is the R130. Positions 151 and 156 each coordinate GTP.

This sequence belongs to the GTP cyclohydrolase II family. It depends on Zn(2+) as a cofactor.

It catalyses the reaction GTP + 4 H2O = 2,5-diamino-6-hydroxy-4-(5-phosphoribosylamino)-pyrimidine + formate + 2 phosphate + 3 H(+). Its pathway is cofactor biosynthesis; riboflavin biosynthesis; 5-amino-6-(D-ribitylamino)uracil from GTP: step 1/4. Functionally, catalyzes the conversion of GTP to 2,5-diamino-6-ribosylamino-4(3H)-pyrimidinone 5'-phosphate (DARP), formate and pyrophosphate. This is GTP cyclohydrolase-2 from Aliivibrio fischeri (strain ATCC 700601 / ES114) (Vibrio fischeri).